The chain runs to 134 residues: Small ribosomal subunit protein uS11 (134 aa).

Residues 113–122 are compositionally biased toward polar residues; the sequence is SSITDATPQP. Residues 113–134 are disordered; sequence SSITDATPQPHNGCRPTKRRKV.

Belongs to the universal ribosomal protein uS11 family. Part of the 30S ribosomal subunit. Interacts with proteins S7 and S18. Binds to IF-3.

Functionally, located on the platform of the 30S subunit, it bridges several disparate RNA helices of the 16S rRNA. Forms part of the Shine-Dalgarno cleft in the 70S ribosome. The polypeptide is Small ribosomal subunit protein uS11 (Corynebacterium aurimucosum (strain ATCC 700975 / DSM 44827 / CIP 107346 / CN-1) (Corynebacterium nigricans)).